Reading from the N-terminus, the 398-residue chain is 8-amino-7-oxononanoate synthase (398 aa).

Arginine 23 contacts substrate. 110–111 lines the pyridoxal 5'-phosphate pocket; it reads GY. Histidine 135 serves as a coordination point for substrate. The pyridoxal 5'-phosphate site is built by serine 181, histidine 209, and threonine 238. Lysine 241 carries the post-translational modification N6-(pyridoxal phosphate)lysine. Residue threonine 355 coordinates substrate.

It belongs to the class-II pyridoxal-phosphate-dependent aminotransferase family. BioF subfamily. Homodimer. The cofactor is pyridoxal 5'-phosphate.

It carries out the reaction 6-carboxyhexanoyl-[ACP] + L-alanine + H(+) = (8S)-8-amino-7-oxononanoate + holo-[ACP] + CO2. It functions in the pathway cofactor biosynthesis; biotin biosynthesis. Its function is as follows. Catalyzes the decarboxylative condensation of pimeloyl-[acyl-carrier protein] and L-alanine to produce 8-amino-7-oxononanoate (AON), [acyl-carrier protein], and carbon dioxide. In Cellvibrio japonicus (strain Ueda107) (Pseudomonas fluorescens subsp. cellulosa), this protein is 8-amino-7-oxononanoate synthase.